A 95-amino-acid chain; its full sequence is Co-chaperonin GroES (95 aa).

This sequence belongs to the GroES chaperonin family. Heptamer of 7 subunits arranged in a ring. Interacts with the chaperonin GroEL.

The protein localises to the cytoplasm. Together with the chaperonin GroEL, plays an essential role in assisting protein folding. The GroEL-GroES system forms a nano-cage that allows encapsulation of the non-native substrate proteins and provides a physical environment optimized to promote and accelerate protein folding. GroES binds to the apical surface of the GroEL ring, thereby capping the opening of the GroEL channel. This Deinococcus radiodurans (strain ATCC 13939 / DSM 20539 / JCM 16871 / CCUG 27074 / LMG 4051 / NBRC 15346 / NCIMB 9279 / VKM B-1422 / R1) protein is Co-chaperonin GroES.